The chain runs to 142 residues: Putative pre-16S rRNA nuclease (142 aa).

It belongs to the YqgF nuclease family.

The protein localises to the cytoplasm. Could be a nuclease involved in processing of the 5'-end of pre-16S rRNA. This Staphylococcus aureus (strain bovine RF122 / ET3-1) protein is Putative pre-16S rRNA nuclease.